The following is a 587-amino-acid chain: Protein cereblon (587 aa).

Disordered regions lie at residues 1 to 56, 78 to 113, and 157 to 195; these read MDEE…PAEY, DVLQDDTASEGSHPSSDMSLESPGSEDDSDVQGLPN, and FSQERRRSRTSEETSQEEAAEEPDDPPPQQPPLPPIDIG. Composition is skewed to polar residues over residues 22–31 and 86–96; these read EDQSQSQGLQ and SEGSHPSSDMS. Over residues 159-168 the composition is skewed to basic and acidic residues; sequence QERRRSRTSE. The segment covering 170–181 has biased composition (acidic residues); it reads TSQEEAAEEPDD. Positions 182-191 are enriched in pro residues; that stretch reads PPPQQPPLPP. The region spanning 227-453 is the Lon N-terminal domain; sequence HMLIFLHHHI…LIKSTFKDET (227 aa). In terms of domain architecture, CULT spans 452-561; sequence ETLFFCRYCN…LSGSSVRIGK (110 aa). Residues Cys457, Cys460, Cys526, and Cys529 each contribute to the Zn(2+) site.

Belongs to the CRBN family. As to quaternary structure, likely a component of a DCX (DDB1-CUL4-X-box) protein ligase complex. May interact with pic/DDB1. Post-translationally, ubiquitinated.

The protein localises to the nucleus. It participates in protein modification; protein ubiquitination. Its function is as follows. Substrate recognition component of a DCX (DDB1-CUL4-X-box) E3 protein ligase complex that mediates the ubiquitination and subsequent proteasomal degradation of target proteins. Has an essential role in mediating growth by negatively regulating insulin signaling. It also has a role in maintaining presynaptic function in the neuromuscular junction synapses of third-instar larvae. The chain is Protein cereblon from Drosophila simulans (Fruit fly).